Reading from the N-terminus, the 221-residue chain is Putative hemin import ATP-binding protein HrtA (221 aa).

The region spanning 3-221 is the ABC transporter domain; it reads LQLKHITKTF…IEIQDGKIEL (219 aa). 39–46 serves as a coordination point for ATP; it reads GASGSGKS.

Belongs to the ABC transporter superfamily. HrtA family. In terms of assembly, the complex is composed of two ATP-binding proteins (HrtA), two transmembrane proteins (HrtB) and a solute-binding protein.

The protein localises to the cell membrane. Functionally, part of the ABC transporter complex hrt involved in hemin import. Responsible for energy coupling to the transport system. The sequence is that of Putative hemin import ATP-binding protein HrtA (hrtA) from Staphylococcus haemolyticus (strain JCSC1435).